Reading from the N-terminus, the 210-residue chain is Aminoglycoside 2'-N-acetyltransferase (210 aa).

Positions 21–189 (IHTSDLDQET…SLFVLPVDLP (169 aa)) constitute an N-acetyltransferase domain. Substrate-binding positions include D54 and 106–107 (EA). Residues 108-110 (VAV) and 115-120 (RGDGLG) contribute to the CoA site. Residues S141 and 176 to 177 (ED) contribute to the substrate site.

Belongs to the AAC(2')-I acetyltransferase family. In terms of assembly, homodimer.

Functionally, catalyzes the coenzyme A-dependent acetylation of the 2' hydroxyl or amino group of a broad spectrum of aminoglycosides. It confers resistance to aminoglycosides. This chain is Aminoglycoside 2'-N-acetyltransferase (aac), found in Mycolicibacterium smegmatis (strain ATCC 700084 / mc(2)155) (Mycobacterium smegmatis).